A 167-amino-acid polypeptide reads, in one-letter code: NAD(P)H-quinone oxidoreductase subunit I, chloroplastic (167 aa).

4Fe-4S ferredoxin-type domains lie at 55-84 (GRIH…VDWK) and 95-124 (LNYS…MTEE). [4Fe-4S] cluster contacts are provided by cysteine 64, cysteine 67, cysteine 70, cysteine 74, cysteine 104, cysteine 107, cysteine 110, and cysteine 114.

This sequence belongs to the complex I 23 kDa subunit family. In terms of assembly, NDH is composed of at least 16 different subunits, 5 of which are encoded in the nucleus. [4Fe-4S] cluster is required as a cofactor.

Its subcellular location is the plastid. The protein resides in the chloroplast thylakoid membrane. The catalysed reaction is a plastoquinone + NADH + (n+1) H(+)(in) = a plastoquinol + NAD(+) + n H(+)(out). The enzyme catalyses a plastoquinone + NADPH + (n+1) H(+)(in) = a plastoquinol + NADP(+) + n H(+)(out). In terms of biological role, NDH shuttles electrons from NAD(P)H:plastoquinone, via FMN and iron-sulfur (Fe-S) centers, to quinones in the photosynthetic chain and possibly in a chloroplast respiratory chain. The immediate electron acceptor for the enzyme in this species is believed to be plastoquinone. Couples the redox reaction to proton translocation, and thus conserves the redox energy in a proton gradient. This chain is NAD(P)H-quinone oxidoreductase subunit I, chloroplastic, found in Lobularia maritima (Sweet alyssum).